The primary structure comprises 160 residues: Cytochrome b6-f complex subunit 4 (160 aa).

3 consecutive transmembrane segments (helical) span residues leucine 36–valine 56, leucine 95–glutamate 115, and threonine 131–isoleucine 151.

It belongs to the cytochrome b family. PetD subfamily. The 4 large subunits of the cytochrome b6-f complex are cytochrome b6, subunit IV (17 kDa polypeptide, PetD), cytochrome f and the Rieske protein, while the 4 small subunits are PetG, PetL, PetM and PetN. The complex functions as a dimer.

It is found in the cellular thylakoid membrane. In terms of biological role, component of the cytochrome b6-f complex, which mediates electron transfer between photosystem II (PSII) and photosystem I (PSI), cyclic electron flow around PSI, and state transitions. The sequence is that of Cytochrome b6-f complex subunit 4 from Gloeothece citriformis (strain PCC 7424) (Cyanothece sp. (strain PCC 7424)).